The sequence spans 117 residues: Basic phospholipase A2 pseudexin B chain (117 aa).

7 disulfide bridges follow: cysteine 11–cysteine 71, cysteine 27–cysteine 117, cysteine 29–cysteine 45, cysteine 44–cysteine 98, cysteine 51–cysteine 91, cysteine 60–cysteine 84, and cysteine 78–cysteine 89. Ca(2+)-binding residues include tyrosine 28, glycine 30, and glycine 32. The active site involves histidine 48. Aspartate 49 contributes to the Ca(2+) binding site. The active site involves aspartate 92.

Belongs to the phospholipase A2 family. Group I subfamily. D49 sub-subfamily. Ca(2+) serves as cofactor. As to expression, expressed by the venom gland.

The protein localises to the secreted. It catalyses the reaction a 1,2-diacyl-sn-glycero-3-phosphocholine + H2O = a 1-acyl-sn-glycero-3-phosphocholine + a fatty acid + H(+). Its function is as follows. PLA2 catalyzes the calcium-dependent hydrolysis of the 2-acyl groups in 3-sn-phosphoglycerides. This chain is Basic phospholipase A2 pseudexin B chain, found in Pseudechis porphyriacus (Red-bellied black snake).